The sequence spans 157 residues: Transcription elongation factor GreA (157 aa).

Residues 1–75 adopt a coiled-coil conformation; that stretch reads MSKEIILTQE…VETLINRAKV (75 aa).

Belongs to the GreA/GreB family.

In terms of biological role, necessary for efficient RNA polymerase transcription elongation past template-encoded arresting sites. The arresting sites in DNA have the property of trapping a certain fraction of elongating RNA polymerases that pass through, resulting in locked ternary complexes. Cleavage of the nascent transcript by cleavage factors such as GreA or GreB allows the resumption of elongation from the new 3'terminus. GreA releases sequences of 2 to 3 nucleotides. The sequence is that of Transcription elongation factor GreA from Mycoplasma capricolum subsp. capricolum (strain California kid / ATCC 27343 / NCTC 10154).